The primary structure comprises 551 residues: L-lactate permease (551 aa).

12 consecutive transmembrane segments (helical) span residues 13–33 (NIWL…FALI), 37–57 (LKGY…ALLF), 70–90 (VYGF…AVFV), 131–151 (GAAG…GLGF), 159–179 (LCLI…PILV), 194–214 (MVGR…MAIM), 244–264 (FIGP…CLTL), 366–386 (FDWF…SIVW), 405–425 (LALP…SNYS), 438–458 (TGHA…FLTG), 494–514 (VTGK…VGLV), and 530–550 (IFTC…TWMI).

This sequence belongs to the lactate permease family.

It localises to the cell inner membrane. It carries out the reaction (S)-lactate(in) + H(+)(in) = (S)-lactate(out) + H(+)(out). The catalysed reaction is (R)-lactate(in) + H(+)(in) = (R)-lactate(out) + H(+)(out). It catalyses the reaction glycolate(in) + H(+)(in) = glycolate(out) + H(+)(out). Uptake of L-lactate across the membrane. Can also transport D-lactate and glycolate. Seems to be driven by a proton motive force. The chain is L-lactate permease (lldP) from Escherichia coli O6:H1 (strain CFT073 / ATCC 700928 / UPEC).